A 425-amino-acid chain; its full sequence is Raffinose permease (425 aa).

Residues 1 to 11 (MNSASTHKNTD) are Cytoplasmic-facing. A helical membrane pass occupies residues 12–32 (FWIFGLFFFLYFFIMATCFPF). The Periplasmic segment spans residues 33 to 48 (LPVWLSDVVGLSKTDT). A helical transmembrane segment spans residues 49 to 69 (GIVFSCLSLFAISFQPLLGVI). Over 70 to 78 (SDRLGLKKN) the chain is Cytoplasmic. A helical membrane pass occupies residues 79-99 (LIWSISLLLVFFAPFFLYVFA). Topologically, residues 100–105 (PLLHLN) are periplasmic. A helical membrane pass occupies residues 106-126 (IWAGALTGGVFIGFVFSAGAG). Residues 127–147 (AIEAYIERVSRSSGFEYGKAR) are Cytoplasmic-facing. Residues 148 to 168 (MFGCLGWALCATMAGILFNVD) traverse the membrane as a helical segment. A topological domain (periplasmic) is located at residue P169. The helical transmembrane segment at 170–190 (SLVFWMGSGGALLLLLLLYLA) threads the bilayer. Residues 191-229 (RPSTSQTAMVMNALGANSSLISTRMVFSLFRMRQMWMFV) are Cytoplasmic-facing. Residues 230-250 (LYTIGVACVYDVFDQQFAIFF) form a helical membrane-spanning segment. At 251–265 (RSFFDTPQAGIKAFG) the chain is on the periplasmic side. A helical transmembrane segment spans residues 266 to 286 (FATTAGEICNAIIMFCTPWII). Over 287-294 (NRIGAKNT) the chain is Cytoplasmic. The helical transmembrane segment at 295–315 (LLVAGGIMTIRITGSAFATTM) threads the bilayer. T316 is a topological domain (periplasmic). Residues 317 to 337 (EVVILKMLHALEVPFLLVGAF) form a helical membrane-spanning segment. Topologically, residues 338-351 (KYITGVFDTRLSAT) are cytoplasmic. The chain crosses the membrane as a helical span at residues 352–372 (VYLIGFQFSKQLAAILLSTFA). Residues 373–383 (GHLYDRMGFQN) lie on the Periplasmic side of the membrane. A helical transmembrane segment spans residues 384–404 (TYFVLGMIVLTVTVISAFTLS). Topologically, residues 405-425 (SSPGIVHPSVEKAPVAHSEIN) are cytoplasmic.

Belongs to the major facilitator superfamily. Oligosaccharide:H(+) symporter (OHS) (TC 2.A.1.5) family. As to quaternary structure, monomer.

The protein resides in the cell inner membrane. In terms of biological role, responsible for transport of raffinose into the cell. Can also transport lactose and melibiose. Has weak activity with maltose. This is Raffinose permease from Escherichia coli.